The sequence spans 201 residues: Small ribosomal subunit protein uS4 (201 aa).

A disordered region spans residues 20–46 (SGTGKELSRRPYAPGQHGQDRRGSLSE). Positions 93–156 (RRLDNVVYRL…KDLQIVKEAL (64 aa)) constitute an S4 RNA-binding domain.

This sequence belongs to the universal ribosomal protein uS4 family. In terms of assembly, part of the 30S ribosomal subunit. Contacts protein S5. The interaction surface between S4 and S5 is involved in control of translational fidelity.

Functionally, one of the primary rRNA binding proteins, it binds directly to 16S rRNA where it nucleates assembly of the body of the 30S subunit. With S5 and S12 plays an important role in translational accuracy. The protein is Small ribosomal subunit protein uS4 of Ligilactobacillus salivarius (strain UCC118) (Lactobacillus salivarius).